The primary structure comprises 209 residues: Lipid A acyltransferase PagP (209 aa).

The N-terminal stretch at 1 to 24 (MHLKRALITLSLITLPIIPFSSYA) is a signal peptide. Residues H81, D124, and S125 contribute to the active site.

It belongs to the lipid A palmitoyltransferase family. Homodimer.

Its subcellular location is the cell outer membrane. The enzyme catalyses a lipid A + a 1,2-diacyl-sn-glycero-3-phosphocholine = a hepta-acyl lipid A + a 2-acyl-sn-glycero-3-phosphocholine. It catalyses the reaction a lipid IVA + a 1,2-diacyl-sn-glycero-3-phosphocholine = a lipid IVB + a 2-acyl-sn-glycero-3-phosphocholine. It carries out the reaction a lipid IIA + a 1,2-diacyl-sn-glycero-3-phosphocholine = a lipid IIB + a 2-acyl-sn-glycero-3-phosphocholine. Its function is as follows. Transfers a fatty acid residue from the sn-1 position of a phospholipid to the N-linked hydroxyfatty acid chain on the proximal unit of lipid A or its precursors. This chain is Lipid A acyltransferase PagP, found in Pectobacterium parmentieri (strain WPP163) (Pectobacterium wasabiae (strain WPP163)).